We begin with the raw amino-acid sequence, 219 residues long: Abasic site processing protein YobE (219 aa).

The active-site Nucleophile is C2. The residue at position 2 (C2) is a Thiazolidine linkage to a ring-opened DNA abasic site. E106 is a catalytic residue.

It belongs to the SOS response-associated peptidase family.

Formation and reversal of DNA-protein cross-link depends on DNA context. Catalyzes formation of the thiazolidine linkage in presence of abasic sites in single-stranded DNA. Mediates the reversal of the thiazolidine cross-link in presence of double stranded DNA. Functionally, sensor of abasic sites in single-stranded DNA (ssDNA) required to preserve genome integrity by promoting error-free repair of abasic sites. Recognizes and binds abasic sites in ssDNA at replication forks and chemically modifies the lesion by forming a covalent cross-link with DNA: forms a stable thiazolidine linkage between a ring-opened abasic site and the alpha-amino and sulfhydryl substituents of its N-terminal catalytic cysteine residue. The DNA-protein cross-link is then reversed: able to catalyze the reversal of the thiazolidine cross-link and cycle between a cross-link and a non-cross-linked state depending on DNA context: mediates self-reversal of the thiazolidine cross-link in double stranded DNA. May act as a protease: mediates autocatalytic processing of its N-terminal methionine in order to expose the catalytic cysteine. The polypeptide is Abasic site processing protein YobE (yobE) (Bacillus subtilis (strain 168)).